A 1026-amino-acid chain; its full sequence is Multidrug resistance protein MdtC (1026 aa).

11 helical membrane passes run 15–35 (ILIA…LPVA), 333–353 (EVEE…FLFL), 360–380 (LIPA…MYLC), 387–407 (LSLM…IVVL), 431–451 (VGFT…PLLL), 463–483 (FAVT…TLTP), 528–548 (LVGV…IAIP), 853–873 (LILI…LYES), 897–917 (LFNA…IGIV), 953–973 (PIMM…LSGG), and 984–1004 (ITIV…TPVV).

It belongs to the resistance-nodulation-cell division (RND) (TC 2.A.6) family. MdtC subfamily. As to quaternary structure, part of a tripartite efflux system composed of MdtA, MdtB and MdtC. MdtC forms a heteromultimer with MdtB.

It localises to the cell inner membrane. The polypeptide is Multidrug resistance protein MdtC (Salmonella dublin (strain CT_02021853)).